The following is a 425-amino-acid chain: RNA-binding protein L (425 aa).

The span at 1-20 (MQQPPSQPQPGMGGPPPPPQ) shows a compositional bias: pro residues. The segment at 1–82 (MQQPPSQPQP…AAPPPQAMPA (82 aa)) is disordered. Residues 21–31 (GAAGQPPQWGA) are compositionally biased toward low complexity. The segment covering 32-80 (IPPPMPPHQYGAPPPQQPPAMWGQPPPQAHYGQVPPPQPYYAAPPPQAM) has biased composition (pro residues). 3 consecutive RRM domains span residues 90 to 170 (KTLW…WASA), 180 to 259 (YTIF…PAAN), and 284 to 356 (TTIF…WGRS).

This sequence belongs to the polyadenylate-binding RBP45 family. In terms of assembly, interacts with RBP-P. Interacts with RAB5A.

It localises to the nucleus. Its subcellular location is the cytoplasm. RNA-binding protein that binds to a cis-localization element or zipcode, within the 5'-CDS of prolamine RNA. Binds strongly to glutelin and prolamin mRNAs, particularly to 3'-UTR and zipcode RNA. Recognizes and binds to glutelin zipcode RNA, which is required for proper mRNA localization to cisternal endoplasmic reticulum. Recognizes and binds to prolamin zipcode RNA, which is required for proper mRNA localization to the protein body endoplasmic reticulum that delimits the prolamine intracisternal inclusion granules. Required for the correct localization of glutelin and prolamine mRNA in endosperm cells during grain development. RBP-L and RBP-P form a quaternary complex with the membrane trafficking factors NSF and RAB5A. This quaternay complex carries glutelin mRNAs for active transport on endosomes to the cortical endoplasmic reticulum membrane, and enables endosome-mediated glutelin mRNA transport in endosperm cells. The protein is RNA-binding protein L of Oryza sativa subsp. japonica (Rice).